We begin with the raw amino-acid sequence, 147 residues long: UPF0251 protein CTC_01373 (147 aa).

The protein belongs to the UPF0251 family.

This Clostridium tetani (strain Massachusetts / E88) protein is UPF0251 protein CTC_01373.